Consider the following 262-residue polypeptide: Global transcriptional regulator CodY (262 aa).

Positions 1 to 159 (MATLLEKTRK…ATTVIGVQLS (159 aa)) are GAF domain. A DNA-binding region (H-T-H motif) is located at residues 207-226 (ASVIADKIGITRSVIVNALR).

Belongs to the CodY family.

It localises to the cytoplasm. DNA-binding global transcriptional regulator which is involved in the adaptive response to starvation and acts by directly or indirectly controlling the expression of numerous genes in response to nutrient availability. During rapid exponential growth, CodY is highly active and represses genes whose products allow adaptation to nutrient depletion. This Lactococcus lactis subsp. cremoris (strain SK11) protein is Global transcriptional regulator CodY.